We begin with the raw amino-acid sequence, 335 residues long: Ornithine carbamoyltransferase (335 aa).

Residues 56 to 59, Gln83, Arg107, and 134 to 137 each bind carbamoyl phosphate; these read STRT and HPTQ. Residues Asn168, Asp232, and 236-237 contribute to the L-ornithine site; that span reads SM. Carbamoyl phosphate-binding positions include 274-275 and Arg320; that span reads CL.

Belongs to the aspartate/ornithine carbamoyltransferase superfamily. OTCase family.

The protein localises to the cytoplasm. It catalyses the reaction carbamoyl phosphate + L-ornithine = L-citrulline + phosphate + H(+). It participates in amino-acid biosynthesis; L-arginine biosynthesis; L-arginine from L-ornithine and carbamoyl phosphate: step 1/3. Its function is as follows. Reversibly catalyzes the transfer of the carbamoyl group from carbamoyl phosphate (CP) to the N(epsilon) atom of ornithine (ORN) to produce L-citrulline. The chain is Ornithine carbamoyltransferase from Pectobacterium atrosepticum (strain SCRI 1043 / ATCC BAA-672) (Erwinia carotovora subsp. atroseptica).